We begin with the raw amino-acid sequence, 331 residues long: Dioxygenase swnH2 (331 aa).

The span at 1 to 11 shows a compositional bias: polar residues; sequence MINSDAQSAQK. The segment at 1 to 31 is disordered; sequence MINSDAQSAQKQVEVEKPDEKYSAPRLLPPI. A compositionally biased stretch (basic and acidic residues) spans 13 to 23; that stretch reads VEVEKPDEKYS. Fe cation-binding residues include His-173, Asp-175, and His-250.

The protein belongs to the PhyH family. Homodimer. Fe cation is required as a cofactor.

It functions in the pathway mycotoxin biosynthesis. Functionally, dioxygenase; part of the gene cluster that mediates the biosynthesis of swainsonine (SW), a cytotoxic fungal alkaloid and a potential cancer therapy drug. Swainsonine production occurs via a multibranched pathway and is dispensable for fungal colonization of plants and infection of insect hosts. The first step of swainsonine biosynthesis is the production of the precursor pipecolic acid (PA) via conversion of L-lysine (Lys) to 1-piperideine-6-carboxylate (P6C) by the aminotransferase swnA, the latter being further reduced to PA by the reductase swnR. PA can be converted from lysine by both the SW biosynthetic cluster and the unclustered genes such as lysine cyclodeaminase. The PKS-NRPS hybrid synthetase swnK uptakes and condensates PA and malonyl-CoA with and without skipping of the ketoreductase (KR) domain in order to produce 3 intermediates, 1-oxoindolizidine, (1S)-1-hydroxyindolizin, and (1R)-1-hydroxyindolizine; with the transisomer (1S)-1-hydroxyindolizin being predominant. The terminal thioester reductase (TE) domain of swnK is involved in reduction of the thioester bond to release the intermediate aldehydes. The oxidoreductase swnN could contribute to the reduction of 1-oxoindolizidine to (1S)-1-hydroxyindolizin and (1R)-1-hydroxyindolizine, contributing to the major route of SW production. The dioxygenase swnH2 would be responsible for the oxidization of (1R)-1-hydroxyindolizine into (1R,2S)-1,2-dihydroxyindolizine and of (1S)-1-hydroxyindolizin to yield both (1R,2S)-1,2-dihydroxyindolizine and (1S,2S)-1,2-dihydroxyindolizine. The dioxygenase swnH1 then performs the conversion of the 1,2-dihydroxyindolizine epimers to SW. The sequence is that of Dioxygenase swnH2 from Metarhizium robertsii (strain ARSEF 23 / ATCC MYA-3075) (Metarhizium anisopliae (strain ARSEF 23)).